Reading from the N-terminus, the 436-residue chain is UDP-N-acetylmuramate--L-alanine ligase (436 aa).

111-117 (GTHGKTS) is a binding site for ATP.

The protein belongs to the MurCDEF family.

The protein resides in the cytoplasm. It catalyses the reaction UDP-N-acetyl-alpha-D-muramate + L-alanine + ATP = UDP-N-acetyl-alpha-D-muramoyl-L-alanine + ADP + phosphate + H(+). Its pathway is cell wall biogenesis; peptidoglycan biosynthesis. In terms of biological role, cell wall formation. This chain is UDP-N-acetylmuramate--L-alanine ligase, found in Pediococcus pentosaceus (strain ATCC 25745 / CCUG 21536 / LMG 10740 / 183-1w).